Here is a 296-residue protein sequence, read N- to C-terminus: Nucleotide-binding protein Rmet_0297 (296 aa).

8-15 (GISGSGKS) contributes to the ATP binding site. Residue 57 to 60 (DIRS) participates in GTP binding.

The protein belongs to the RapZ-like family.

Functionally, displays ATPase and GTPase activities. This is Nucleotide-binding protein Rmet_0297 from Cupriavidus metallidurans (strain ATCC 43123 / DSM 2839 / NBRC 102507 / CH34) (Ralstonia metallidurans).